The primary structure comprises 67 residues: Protein AaeX (67 aa).

The next 2 membrane-spanning stretches (helical) occupy residues 3-23 (LFPVIVVFGLSFPPIFFELLL) and 43-63 (FVWHPALFNTALYCCLFYLIS).

This sequence belongs to the AaeX family.

The protein resides in the cell membrane. This Salmonella agona (strain SL483) protein is Protein AaeX.